A 297-amino-acid chain; its full sequence is MLILQAFIQSPGETFLNLGFITIRWYGLLISVSVLIGLFVSKKLAKARNINPEYISEILPSLIISSILGARAYYVIFEWRQYSGENFFTSFELFNSIIKIPSFFAVWEGGIAIHGGLIGGLISIIYFCKSKNINLKTFIDILIPSIILGQSIGRWGNFFNNEAFGVPTNLPWKLFIPIQNRPLEFLNYEFFHPTFLYESLWNLLIFIALIIIFNKQNKTDFFRPGFISFLYLISYSFGRFWIEGLRTDPLCIGGLPPFCDGGIRMAQFISIFLFSSGLIGIFFLRLRSCNGKNRKNG.

A run of 4 helical transmembrane segments spans residues Phe20 to Val40, Glu57 to Phe77, Ala105 to Ile125, and Ile133 to Gly153. Arg154 serves as a coordination point for a 1,2-diacyl-sn-glycero-3-phospho-(1'-sn-glycerol). Transmembrane regions (helical) follow at residues Pro193–Phe213, Gly225–Leu245, and Ala266–Leu286.

It belongs to the Lgt family.

It is found in the cell inner membrane. The enzyme catalyses L-cysteinyl-[prolipoprotein] + a 1,2-diacyl-sn-glycero-3-phospho-(1'-sn-glycerol) = an S-1,2-diacyl-sn-glyceryl-L-cysteinyl-[prolipoprotein] + sn-glycerol 1-phosphate + H(+). It participates in protein modification; lipoprotein biosynthesis (diacylglyceryl transfer). Functionally, catalyzes the transfer of the diacylglyceryl group from phosphatidylglycerol to the sulfhydryl group of the N-terminal cysteine of a prolipoprotein, the first step in the formation of mature lipoproteins. In Prochlorococcus marinus (strain MIT 9215), this protein is Phosphatidylglycerol--prolipoprotein diacylglyceryl transferase.